The primary structure comprises 1962 residues: Sodium channel protein type 10 subunit alpha (1962 aa).

Over 1–125 (MEFPFGSLET…FNLIRRTAIK (125 aa)) the chain is Cytoplasmic. The interval 32–56 (QAAKKAKGKHREQKDQEEKPRPQLD) is disordered. Basic residues predominate over residues 33–42 (AAKKAKGKHR). The segment covering 43 to 55 (EQKDQEEKPRPQL) has biased composition (basic and acidic residues). The I repeat unit spans residues 116–414 (FNLIRRTAIK…VTMAYEEQNQ (299 aa)). Residues 126–149 (VSVHSWFSLFITVTILVNCVGMTQ) form a helical membrane-spanning segment. Residues 150-154 (TELPD) lie on the Extracellular side of the membrane. A helical membrane pass occupies residues 155–174 (RIEYVFTVIYTFEALIKILA). The Cytoplasmic segment spans residues 175–187 (RGFCLNEFAYLRD). The helical transmembrane segment at 188–206 (PWDWLDFSVITLAYIGEAT) threads the bilayer. Topologically, residues 207 to 212 (ALRGIS) are extracellular. Residues 213–232 (GLRTFRVLRALKTVSVIPGL) traverse the membrane as a helical; Voltage-sensor segment. Residues 233–248 (KVIVGALIHSVRKLAD) are Cytoplasmic-facing. A helical transmembrane segment spans residues 249–272 (VTILTVFCLSVFALVGLQLFKGNL). Over 273–350 (KNKCVKNCAA…PDFNYTSFDS (78 aa)) the chain is Extracellular. Cysteines 276 and 328 form a disulfide. Residues N284, N288, N321, and N344 are each glycosylated (N-linked (GlcNAc...) asparagine). The pore-forming intramembrane region spans 351–375 (FAWAFLSLFRLMTQDSWERLYQQTL). Residues 376–382 (RASGKMY) are Extracellular-facing. Residues 383-408 (MVFFVLVIFLGSFYLVNLILAVVTMA) traverse the membrane as a helical segment. Residues 409-668 (YEEQNQATID…TWVKLKTVLF (260 aa)) are Cytoplasmic-facing. 4 positions are modified to phosphoserine: S450, S453, S476, and S488. Polar residues predominate over residues 452–463 (HSCNGSPLPSKN). Disordered regions lie at residues 452–493 (HSCN…PYNQ) and 521–586 (LDTS…TGEL). Phosphoserine is present on residues S621 and S624. One copy of the II repeat lies at 656 to 920 (CCPTWVKLKT…DEDGEVNNLQ (265 aa)). Residues 669–693 (GIVTDPFAELTTTLCIVVNTVFMAM) traverse the membrane as a helical segment. The Extracellular portion of the chain corresponds to 694 to 704 (EHHGMSSAFEA). The chain crosses the membrane as a helical span at residues 705-728 (MLQIGNIVFTVFFTAEMVFKIIAF). The Cytoplasmic segment spans residues 729 to 736 (DPYYYFQK). Residues 737–756 (RWNIFDCIIVTVSLIELGAA) form a helical membrane-spanning segment. Topologically, residues 757-762 (RKGSLS) are extracellular. The helical; Voltage-sensor transmembrane segment at 763–782 (VLRTFRLLRVFKLAKSWPTL) threads the bilayer. Over 783–798 (NTLIKIIGNSVGALGN) the chain is Cytoplasmic. Residues 799–819 (LTIILAIIVFVFALVGKQLLG) form a helical membrane-spanning segment. Topologically, residues 820 to 843 (ENYRDNRRNISAPNEEWPRWHMHD) are extracellular. An N-linked (GlcNAc...) asparagine glycan is attached at N828. An intramembrane region (pore-forming) is located at residues 844-864 (FFHSFLIVFRILCGEWIENMW). Residues 865–873 (ACMEVGQKS) are Extracellular-facing. C866 and C875 are disulfide-bonded. Residues 874–899 (ICLILFLTVMVLGNLVVLNLFTALLL) form a helical membrane-spanning segment. Over 900–1154 (NSFSADNLAT…GWQVRKTCYR (255 aa)) the chain is Cytoplasmic. Positions 1015 to 1026 (LDDLEEDGEEDS) are enriched in acidic residues. Residues 1015–1035 (LDDLEEDGEEDSQSSQQEVIL) form a disordered region. One copy of the III repeat lies at 1147–1456 (QVRKTCYRIV…KKYYNAMKKL (310 aa)). A helical transmembrane segment spans residues 1155–1178 (IVEHSWFESFIIFMILLSSGSLAF). The Extracellular portion of the chain corresponds to 1179 to 1191 (EDYHLDQKPTVKA). A helical membrane pass occupies residues 1192–1217 (LLEYTDRMFTFIFVLEMLLKWVAYGF). Over 1218–1223 (KKYFTN) the chain is Cytoplasmic. Residues 1224 to 1245 (AWCWLDFLIVNISLISLIAKIL) form a helical membrane-spanning segment. The Extracellular portion of the chain corresponds to 1246–1249 (QYSD). The helical; Voltage-sensor transmembrane segment at 1250–1271 (VASIKALRTLRALRPLRALSRF) threads the bilayer. The Cytoplasmic portion of the chain corresponds to 1272–1290 (EGMRVVVDALVGAIPSIMN). Residues 1291-1318 (VLLVCLIFWLIFSTMGVNFFAGKFGRCI) form a helical membrane-spanning segment. 3 N-linked (GlcNAc...) asparagine glycosylation sites follow: N1319, N1335, and N1343. Topologically, residues 1319 to 1360 (NKTNEYFSLVPLSIVNNISDCKYQNHTGSFFWVNVKVNFDNV) are extracellular. Residues 1361–1382 (AMGYLALLQVATFKGWMDIMYA) constitute an intramembrane region (pore-forming). Residues 1383–1398 (AVDARDVNLQPKWEDN) lie on the Extracellular side of the membrane. A helical membrane pass occupies residues 1399–1425 (VYMYLYFVIFIIFGGFFTLNLFVGVII). Over 1426-1478 (DNFNQQKKKLGGQDIFMTEEQKKYYNAMKKLGSKKPQKPIPRPLNKYQGFVFD) the chain is Cytoplasmic. At S1458 the chain carries Phosphoserine; by PKC. One copy of the IV repeat lies at 1465-1764 (IPRPLNKYQG…WEKFDPEATQ (300 aa)). The chain crosses the membrane as a helical span at residues 1479–1502 (IVTKQAFDIVIMVLICLNMITMMV). Topologically, residues 1503-1513 (ETDEQSAEKTK) are extracellular. The chain crosses the membrane as a helical span at residues 1514 to 1537 (ILNKINQFFVAVFTGECVMKMFAL). Residues 1538 to 1543 (RHYYFT) lie on the Cytoplasmic side of the membrane. The chain crosses the membrane as a helical span at residues 1544–1567 (NGWNVFDFIVVVLSIGSLVFSVIL). Residues 1568 to 1579 (TSLENYFSPTLF) lie on the Extracellular side of the membrane. Residues 1580 to 1601 (RVIRLARIGRILRLIRAAKGIR) traverse the membrane as a helical; Voltage-sensor segment. At 1602 to 1616 (TLLFALMMSLPALFN) the chain is on the cytoplasmic side. The chain crosses the membrane as a helical span at residues 1617–1639 (IGLLLFLVMFIYSIFGMASFPHV). Topologically, residues 1640 to 1653 (SWEAGIDDMFNFQT) are extracellular. The segment at residues 1654-1676 (FANSMLCLFQITTSAGWDGLLSP) is an intramembrane region (pore-forming). The Extracellular portion of the chain corresponds to 1677–1704 (ILNTGPPYCDPNLPNSNGSRGNCGSPAV). N-linked (GlcNAc...) asparagine glycosylation is present at N1693. Residues 1705–1729 (GILFFTTYIIISFLIVVNMYIAVIL) form a helical membrane-spanning segment. The Cytoplasmic portion of the chain corresponds to 1730–1962 (ENFNVATQES…TSKKVTAPGP (233 aa)). Residues 1858–1887 (EDISATVIQKAYRSYVLHRSMTISNPPAVP) form the IQ domain. Residues 1914–1962 (KSETASAASFPPSYDSVTRGLSDQINMSTSSSMQNEDEGTSKKVTAPGP) form a disordered region. Residues 1928–1947 (DSVTRGLSDQINMSTSSSMQ) are compositionally biased toward polar residues.

This sequence belongs to the sodium channel (TC 1.A.1.10) family. Nav1.8/SCN10A subfamily. As to quaternary structure, the channel consists of an ion conducting pore forming alpha-subunit regulated by one or more associated auxiliary subunits SCN1B, SCN2B and SCN3B; electrophysiological properties may vary depending on the type of the associated beta subunits. Found in a number of complexes with PRX, DYNLT1 and PDZD2. Interacts with proteins such as FSTL1, PRX, DYNLT1, PDZD2, S100A10 and many others. Interacts with NEDD4 and NEDD4L. Post-translationally, ubiquitinated by NEDD4L; which promotes its endocytosis. In terms of processing, phosphorylation at Ser-1458 by PKC in a highly conserved cytoplasmic loop slows inactivation of the sodium channel and reduces peak sodium currents. Lacks the cysteine which covalently binds the conotoxin GVIIJ. This cysteine (position 825) is speculated in other sodium channel subunits alpha to be implied in covalent binding with the sodium channel subunit beta-2 or beta-4. Expressed in nodose ganglia, but not in cortex, hippocampus, cerebellum, liver, heart and skeletal muscle.

It localises to the cell membrane. It carries out the reaction Na(+)(in) = Na(+)(out). Functionally, tetrodotoxin-resistant channel that mediates the voltage-dependent sodium ion permeability of excitable membranes. Assuming opened or closed conformations in response to the voltage difference across the membrane, the protein forms a sodium-selective channel through which sodium ions may pass in accordance with their electrochemical gradient. Plays a role in neuropathic pain mechanisms. This is Sodium channel protein type 10 subunit alpha (SCN10A) from Canis lupus familiaris (Dog).